The chain runs to 307 residues: Small ribosomal subunit protein bS1 (307 aa).

S1 motif domains lie at Gly32–Arg101, Asp119–Arg183, and Gly197–Lys265.

It belongs to the bacterial ribosomal protein bS1 family.

Binds mRNA. The polypeptide is Small ribosomal subunit protein bS1 (rpsA) (Synechococcus sp. (strain ATCC 27144 / PCC 6301 / SAUG 1402/1) (Anacystis nidulans)).